A 220-amino-acid chain; its full sequence is UPF0319 protein YccT (220 aa).

The N-terminal stretch at 1–20 (MKTGIVTTLIALCLPVSVFA) is a signal peptide.

This sequence belongs to the UPF0319 family.

The chain is UPF0319 protein YccT from Shigella flexneri serotype 5b (strain 8401).